We begin with the raw amino-acid sequence, 123 residues long: Protein Wnt-3a (123 aa).

The O-palmitoleoyl serine moiety is linked to residue Ser1. Residues Cys89 and Cys104 are joined by a disulfide bond. An N-linked (GlcNAc...) asparagine glycan is attached at Asn90.

This sequence belongs to the Wnt family. Post-translationally, disulfide bonds have critical and distinct roles in secretion and activity. Loss of each conserved cysteine results in high molecular weight oxidized Wnt oligomers, which are formed through inter-Wnt disulfide bonding. In terms of processing, palmitoleoylation is required for efficient binding to frizzled receptors. Depalmitoleoylation leads to Wnt signaling pathway inhibition.

It localises to the secreted. The protein localises to the extracellular space. The protein resides in the extracellular matrix. Its function is as follows. Ligand for members of the frizzled family of seven transmembrane receptors. Functions in the canonical Wnt signaling pathway that results in activation of transcription factors of the TCF/LEF family. Required for normal embryonic mesoderm development and formation of caudal somites. Required for normal morphogenesis of the developing neural tube. The sequence is that of Protein Wnt-3a (WNT-3A) from Pituophis melanoleucus (Pine snake).